A 270-amino-acid chain; its full sequence is tRNA pseudouridine synthase A (270 aa).

The active-site Nucleophile is the D52. Y110 serves as a coordination point for substrate. The interval 251–270 is disordered; the sequence is TGAADEPAAPHGVTETRMQL.

The protein belongs to the tRNA pseudouridine synthase TruA family. As to quaternary structure, homodimer.

The catalysed reaction is uridine(38/39/40) in tRNA = pseudouridine(38/39/40) in tRNA. Functionally, formation of pseudouridine at positions 38, 39 and 40 in the anticodon stem and loop of transfer RNAs. This Roseiflexus sp. (strain RS-1) protein is tRNA pseudouridine synthase A.